We begin with the raw amino-acid sequence, 858 residues long: Leucine--tRNA ligase (858 aa).

The 'HIGH' region signature appears at 42–52; that stretch reads PYPSGRLHMGH. The 'KMSKS' region signature appears at 618–622; the sequence is KMSKS. Residue Lys-621 participates in ATP binding.

The protein belongs to the class-I aminoacyl-tRNA synthetase family.

It is found in the cytoplasm. The enzyme catalyses tRNA(Leu) + L-leucine + ATP = L-leucyl-tRNA(Leu) + AMP + diphosphate. This is Leucine--tRNA ligase from Aliivibrio salmonicida (strain LFI1238) (Vibrio salmonicida (strain LFI1238)).